Here is a 462-residue protein sequence, read N- to C-terminus: Argininosuccinate lyase (462 aa).

The protein belongs to the lyase 1 family. Argininosuccinate lyase subfamily.

The protein resides in the cytoplasm. It carries out the reaction 2-(N(omega)-L-arginino)succinate = fumarate + L-arginine. The protein operates within amino-acid biosynthesis; L-arginine biosynthesis; L-arginine from L-ornithine and carbamoyl phosphate: step 3/3. This chain is Argininosuccinate lyase, found in Bacillus mycoides (strain KBAB4) (Bacillus weihenstephanensis).